The following is a 160-amino-acid chain: Large ribosomal subunit protein uL10 (160 aa).

The protein belongs to the universal ribosomal protein uL10 family. As to quaternary structure, part of the ribosomal stalk of the 50S ribosomal subunit. The N-terminus interacts with L11 and the large rRNA to form the base of the stalk. The C-terminus forms an elongated spine to which L12 dimers bind in a sequential fashion forming a multimeric L10(L12)X complex.

Functionally, forms part of the ribosomal stalk, playing a central role in the interaction of the ribosome with GTP-bound translation factors. The polypeptide is Large ribosomal subunit protein uL10 (Wolinella succinogenes (strain ATCC 29543 / DSM 1740 / CCUG 13145 / JCM 31913 / LMG 7466 / NCTC 11488 / FDC 602W) (Vibrio succinogenes)).